We begin with the raw amino-acid sequence, 283 residues long: Cyclin-C (283 aa).

Residues 46 to 144 (NVIQALGEHL…VLECEFYLLE (99 aa)) enclose the Cyclin N-terminal domain. The segment at 252 to 283 (TILSKMPKPKPPPNSEGEQGPNGSQNSSYSQS) is disordered. Residues 272–283 (PNGSQNSSYSQS) show a composition bias toward polar residues. Ser-275 is modified (phosphoserine).

This sequence belongs to the cyclin family. Cyclin C subfamily. As to quaternary structure, component of the Mediator complex, which is composed of MED1, MED4, MED6, MED7, MED8, MED9, MED10, MED11, MED12, MED13, MED13L, MED14, MED15, MED16, MED17, MED18, MED19, MED20, MED21, MED22, MED23, MED24, MED25, MED26, MED27, MED29, MED30, MED31, CCNC, CDK8 and CDC2L6/CDK11. The MED12, MED13, CCNC and CDK8 subunits form a distinct module termed the CDK8 module. Mediator containing the CDK8 module is less active than Mediator lacking this module in supporting transcriptional activation. Individual preparations of the Mediator complex lacking one or more distinct subunits have been variously termed ARC, CRSP, DRIP, PC2, SMCC and TRAP. The cylin/CDK pair formed by CCNC/CDK8 also associates with the large subunit of RNA polymerase II.

It is found in the nucleus. In terms of biological role, component of the Mediator complex, a coactivator involved in regulated gene transcription of nearly all RNA polymerase II-dependent genes. Mediator functions as a bridge to convey information from gene-specific regulatory proteins to the basal RNA polymerase II transcription machinery. Mediator is recruited to promoters by direct interactions with regulatory proteins and serves as a scaffold for the assembly of a functional preinitiation complex with RNA polymerase II and the general transcription factors. Binds to and activates cyclin-dependent kinase CDK8 that phosphorylates the CTD (C-terminal domain) of the large subunit of RNA polymerase II (RNAp II), which may inhibit the formation of a transcription initiation complex. The polypeptide is Cyclin-C (CCNC) (Bos taurus (Bovine)).